The sequence spans 690 residues: Adhesion G protein-coupled receptor L4 (690 aa).

A signal peptide spans 1–19; it reads MKRLPLLVVFSTLLNCSYT. The EGF-like 1 domain occupies 20 to 57; that stretch reads QNCTKTPCLPNAKCEIRNGIEACYCNMGFSGNGVTICE. Topologically, residues 20-432 are extracellular; that stretch reads QNCTKTPCLP…DYNILTRITQ (413 aa). Asn21 carries N-linked (GlcNAc...) asparagine glycosylation. Disulfide bonds link Cys22–Cys33, Cys27–Cys42, Cys44–Cys56, Cys62–Cys75, Cys69–Cys84, and Cys86–Cys107. Residues 58–108 enclose the EGF-like 2; calcium-binding domain; that stretch reads DDNECGNLTQSCGENANCTNTEGSYYCMCVPGFRSSSNQDRFITNDGTVCI. Residues Asn64 and Asn74 are each glycosylated (N-linked (GlcNAc...) asparagine). Residues Asn127, Asn177, Asn188, Asn249, Asn381, and Asn395 are each glycosylated (N-linked (GlcNAc...) asparagine). Residues 244–419 enclose the GAIN-B domain; that stretch reads TEFDTNSTDI…AILMSSGPSI (176 aa). Cystine bridges form between Cys370-Cys401 and Cys389-Cys403. The GPS stretch occupies residues 370–419; it reads CAFWNYSPDTMNGSWSSEGCELTYSNETHTSCRCNHLTHFAILMSSGPSI. A helical transmembrane segment spans residues 433–453; that stretch reads LGIIISLICLAICIFTFWFFS. The Cytoplasmic segment spans residues 454–460; that stretch reads EIQSTRT. The chain crosses the membrane as a helical span at residues 461–481; the sequence is TIHKNLCCSLFLAELVFLVGI. The Extracellular segment spans residues 482-499; sequence NTNTNKLFCSIIAGLLHY. A helical membrane pass occupies residues 500–520; sequence FFLAAFAWMCIEGIHLYLIVV. The Cytoplasmic portion of the chain corresponds to 521–532; it reads GVIYNKGFLHKN. The helical transmembrane segment at 533–553 threads the bilayer; sequence FYIFGYLSPAVVVGFSAALGY. Over 554-573 the chain is Extracellular; sequence RYYGTTKVCWLSTENNFIWS. The helical transmembrane segment at 574–594 threads the bilayer; the sequence is FIGPACLIILVNLLAFGVIIY. Residues 595–618 are Cytoplasmic-facing; the sequence is KVFRHTAGLKPEVSCFENIRSCAR. The chain crosses the membrane as a helical span at residues 619-639; sequence GALALLFLLGTTWIFGVLHVV. Residues 640 to 646 are Extracellular-facing; that stretch reads HASVVTA. A helical transmembrane segment spans residues 647–667; the sequence is YLFTVSNAFQGMFIFLFLCVL. Topologically, residues 668-690 are cytoplasmic; the sequence is SRKIQEEYYRLFKNVPCCFGCLR.

Belongs to the G-protein coupled receptor 2 family. Adhesion G-protein coupled receptor (ADGR) subfamily. As to quaternary structure, heterodimer of 2 chains generated by proteolytic processing; the large extracellular N-terminal fragment and the membrane-bound C-terminal fragment predominantly remain associated and non-covalently linked. In terms of processing, glycosylated. Post-translationally, proteolytically cleaved into 2 subunits, an extracellular alpha subunit and a seven-transmembrane subunit. In terms of tissue distribution, detected in the majority of epithelial cells in tumor and normal tissues. Expressed also in human umbilical vein endothelial cells.

It is found in the cell membrane. Its function is as follows. Endothelial orphan receptor that acts as a key regulator of angiogenesis. The sequence is that of Adhesion G protein-coupled receptor L4 from Homo sapiens (Human).